We begin with the raw amino-acid sequence, 321 residues long: Fructose-1,6-bisphosphatase 2 class 2 (321 aa).

Mn(2+) is bound by residues Asp32, Glu56, Asp84, and Glu87. Substrate is bound by residues 87–89, Tyr118, 163–165, 185–187, and Gly209; these read EGT, KPR, and DGD. Glu212 contributes to the Mn(2+) binding site.

It belongs to the FBPase class 2 family. In terms of assembly, homodimer. Mn(2+) serves as cofactor.

The enzyme catalyses beta-D-fructose 1,6-bisphosphate + H2O = beta-D-fructose 6-phosphate + phosphate. With respect to regulation, competitively inhibited by low concentrations of phosphate (IC50 of 1.2 mM) and is also sensitive to Li(+) (IC50 of 15.8 mM). Also inhibited by 1 mM ATP or 50 mM KCl (60% and 20% residual activity, respectively). Slightly activated (40-50%) by the addition of 1 mM dithiothreitol in vitro. Functionally, catalyzes the hydrolysis of fructose 1,6-bisphosphate to fructose 6-phosphate. Also displays a low activity toward glucose 1,6-bisphosphate, and no activity against ribulose 1,5-bisphosphate, fructose 2,6-bisphosphate, or fructose 1-phosphate. The protein is Fructose-1,6-bisphosphatase 2 class 2 (yggF) of Escherichia coli (strain K12).